Consider the following 727-residue polypeptide: Plakophilin-1 (727 aa).

Positions 1 to 235 (MNHSPLKTAL…SFSHSRASSK (235 aa)) are required for binding to single stranded DNA. The required for interaction with EIF4A1 stretch occupies residues 1–287 (MNHSPLKTAL…ESAKQQVYQL (287 aa)). A Phosphoserine modification is found at S4. The disordered stretch occupies residues 48-69 (TVKRQKSKSSQSSTLSHSNRGS). Phosphorylation in this region is required for cytoplasmic localization and protein stabilization stretches follow at residues 54 to 69 (SKSSQSSTLSHSNRGS) and 117 to 192 (RFSS…STCS). 4 positions are modified to phosphoserine: S119, S120, S122, and S143. Positions 161–270 (YCDPRGTLRK…KCQAIGAYYI (110 aa)) are required for WNT-mediated nuclear localization. ARM repeat units follow at residues 244–275 (SGLTIPKAVQYLSSQDEKCQAIGAYYIQHTCF), 276–317 (QDES…NLVF), 318–360 (RSTT…NLSS), 361–412 (TDEL…GCLR), 413–443 (NLSSADVGRQTMRNYTGLIDSLMAYVQNCVA), 505–536 (NYDCPLPEEEPNPKGSSWLYHSDAVRTYLNLM), 537–583 (GKSK…IARL), 584–629 (LQSG…SHTG), and 630–693 (NTSN…DMWS).

The protein belongs to the beta-catenin family. Part of a complex that contains DSG3, PKP1, YAP1 and YWHAG; the complex is required for localization of DSG3 and YAP1 to the cell membrane in keratinocytes. Interacts (via N-terminus) with KRT5/CK5, KRT8/CK8 (via rod domain), KRT15/CK15 and KRT18/CK18 (via rod domain) as part of intermediate filaments. Interacts with VIM (via rod domain). Interacts with DSP. Interacts with DES. Interacts with FXR1; the interaction may facilitate the binding of PKP1 to PKP2, PKP3 and DSP mRNA. Interacts (via N-terminus) with EIF4A1; the interaction promotes EIF4A1 recruitment to the cap-dependent translation complex and EIF4A1 ATPase activity. Interacts with TJP1/ZO-1; the interaction facilitates TJP1/ZO-1 localization to the plasma membrane. Interacts (when phosphorylated) with YWHAG; the interaction results in translocation of PKP1 to the cytoplasm and loss of intercellular adhesion in keratinocytes. In terms of processing, phosphorylated by AKT2; required for interaction with YWHAG and subsequent localization away from desmosomes to the cytoplasm. Phosphorylation of Ser-119 by AKT2 promotes PKP1-driven cap-dependent mRNA translation and decreases intercellular adhesion, phosphorylation is promoted by insulin. Phosphorylation by RIPK4 at the N-terminus is required for its role in differentiation of keratinocytes and DSG1 localization at cell junctions.

It localises to the nucleus. It is found in the cytoplasm. The protein resides in the perinuclear region. Its subcellular location is the cell junction. The protein localises to the desmosome. It localises to the cell membrane. It is found in the stress granule. In terms of biological role, a component of desmosome cell-cell junctions which are required for positive regulation of cellular adhesion. Plays a role in desmosome protein expression regulation and localization to the desmosomal plaque, thereby maintaining cell sheet integrity and anchorage of desmosomes to intermediate filaments. Required for localization of DSG3 and YAP1 to the cell membrane in keratinocytes in response to mechanical strain, via the formation of an interaction complex composed of DSG3, YAP1, PKP1 and YWHAG. Positively regulates differentiation of keratinocytes, potentially via promoting localization of DSG1 at desmosome cell junctions. Required for calcium-independent development and maturation of desmosome plaques specifically at lateral cell-cell contacts in differentiating keratinocytes. Plays a role in the maintenance of DSG3 protein abundance, DSG3 clustering and localization of these clusters to the cell membrane in keratinocytes. May also promote keratinocyte proliferation and morphogenesis during postnatal development. Required for tight junction inside-out transepidermal barrier function of the skin. Promotes Wnt-mediated proliferation and differentiation of ameloblasts, via facilitating TJP1/ZO-1 localization to tight junctions. Binds single-stranded DNA (ssDNA), and may thereby play a role in sensing DNA damage and promoting cell survival. Positively regulates cap-dependent translation and as a result cell proliferation, via recruitment of EIF4A1 to the initiation complex and promotion of EIF4A1 ATPase activity. Regulates the mRNA stability and protein abundance of desmosome components PKP2, PKP3, DSC2 and DSP, potentially via its interaction with FXR1. May facilitate the formation of intermediate filaments. The polypeptide is Plakophilin-1 (PKP1) (Bos taurus (Bovine)).